Consider the following 205-residue polypeptide: Transcriptional regulator GfcR (205 aa).

This sequence belongs to the purine/pyrimidine phosphoribosyltransferase family. GfcR subfamily.

The sequence is that of Transcriptional regulator GfcR from Methanococcus vannielii (strain ATCC 35089 / DSM 1224 / JCM 13029 / OCM 148 / SB).